Consider the following 436-residue polypeptide: GTPase Der (436 aa).

EngA-type G domains lie at 4-167 (PTVA…PVEE) and 175-351 (IRFS…ESQN). Residues 10 to 17 (GRPNVGKS), 57 to 61 (DTGGI), 119 to 122 (NKVD), 181 to 188 (GRPNVGKS), 229 to 233 (DTAGM), and 294 to 297 (NKWD) each bind GTP. The KH-like domain maps to 352-436 (KRIPSAVLND…PIHLIARKRK (85 aa)).

Belongs to the TRAFAC class TrmE-Era-EngA-EngB-Septin-like GTPase superfamily. EngA (Der) GTPase family. As to quaternary structure, associates with the 50S ribosomal subunit.

GTPase that plays an essential role in the late steps of ribosome biogenesis. The chain is GTPase Der from Streptococcus pyogenes serotype M1.